Here is a 155-residue protein sequence, read N- to C-terminus: MSEENQQPERQFAIQKLYVKDVSFETPNSPAVFTLKWEPKVEFNLGSKVQQLQEGLFEVSLSVTITVKLEEKTAYLVEICQAGIFTISGFPEQEMGPLLGSYCPNILFPYAREAVSDLVNKGGFPPMLLAPINFDALYMQQVQMAQQQAQPATPH.

It belongs to the SecB family. Homotetramer, a dimer of dimers. One homotetramer interacts with 1 SecA dimer.

It is found in the cytoplasm. In terms of biological role, one of the proteins required for the normal export of preproteins out of the cell cytoplasm. It is a molecular chaperone that binds to a subset of precursor proteins, maintaining them in a translocation-competent state. It also specifically binds to its receptor SecA. This is Protein-export protein SecB from Methylococcus capsulatus (strain ATCC 33009 / NCIMB 11132 / Bath).